Consider the following 551-residue polypeptide: Solute carrier family 22 member 3 (551 aa).

A helical transmembrane segment spans residues 21-41 (VFLLLCLTGVTFAFLFVGVVF). N-linked (GlcNAc...) asparagine glycans are attached at residues asparagine 72, asparagine 99, and asparagine 114. The helical transmembrane segment at 177-197 (LIVYLISCFGVGITGVVVAFA) threads the bilayer. Asparagine 199 is a glycosylation site (N-linked (GlcNAc...) asparagine). 2 helical membrane-spanning segments follow: residues 236-256 (IVGI…PGIA) and 264-284 (GIQL…WVVP). The Proline-rich sequence signature appears at 284–288 (PESPR). N-linked (GlcNAc...) asparagine glycosylation occurs at asparagine 317. 3 consecutive transmembrane segments (helical) span residues 376–396 (MDFF…LLTI), 463–483 (FGVS…PFLL), and 493–513 (LPLI…MLLP).

Belongs to the major facilitator (TC 2.A.1) superfamily. Organic cation transporter (TC 2.A.1.19) family. As to expression, highly expressed in placenta. Expressed in intestine, hear, kidney and lung. Widely expressed in brain, particularly in hippocampus, cerebellum, cerebral cortex. In the brain, expressed predominantly in regions located at the brain-cerebrospinal fluid border, with expression extending to regions that belong to monoaminergic pathways such as raphe nuclei, striatum and thalamus. In brain, expressed in neurons and glial cells of amygdala. Expression is low in kidney and lung and undetectable in liver. Expressed in Sertoli cells in testis. Expressed in tracheal and bronchial epithelium of the respiratory tract, where it localizes to the apical membrane of ciliated and brush cells, and in basal cells.

The protein resides in the cell membrane. The protein localises to the apical cell membrane. Its subcellular location is the basolateral cell membrane. It is found in the mitochondrion membrane. It localises to the endomembrane system. The protein resides in the nucleus membrane. The protein localises to the nucleus outer membrane. The catalysed reaction is (R)-noradrenaline(out) = (R)-noradrenaline(in). It catalyses the reaction (R)-adrenaline(out) = (R)-adrenaline(in). The enzyme catalyses serotonin(out) = serotonin(in). It carries out the reaction dopamine(out) = dopamine(in). The catalysed reaction is histamine(out) = histamine(in). It catalyses the reaction tyramine(in) = tyramine(out). The enzyme catalyses guanidine(out) = guanidine(in). It carries out the reaction agmatine(out) = agmatine(in). The catalysed reaction is spermidine(in) = spermidine(out). It catalyses the reaction L-histidyl-L-proline diketopiperazine(in) = L-histidyl-L-proline diketopiperazine(out). The enzyme catalyses (R)-salsolinol(in) = (R)-salsolinol(out). In terms of biological role, electrogenic voltage-dependent transporter that mediates the transport of a variety of organic cations such as endogenous bioactive amines, cationic drugs and xenobiotics. Cation cellular uptake or release is driven by the electrochemical potential, i.e. membrane potential and concentration gradient. Functions as a Na(+)- and Cl(-)-independent, bidirectional uniporter. Implicated in neuronal monoamine neurotransmitters cellular uptake such as dopamine, adrenaline/epinephrine, noradrenaline/norepinephrine, histamine, serotonin and tyramine, thereby supporting a role in homeostatic regulation of aminergic neurotransmission in the brain. Transports dopaminergic neuromodulators cyclo(his-pro) and salsolinol with low efficiency. May be involved in the uptake and disposition of cationic compounds by renal clearance from the blood flow. May contribute to regulate the transport of cationic compounds in testis across the blood-testis-barrier. Mediates the transport of polyamine spermidine and putrescine. Mediates the bidirectional transport of polyamine agmatine. Also transports guanidine. May also mediate intracellular transport of organic cations, thereby playing a role in amine metabolism and intracellular signaling. The sequence is that of Solute carrier family 22 member 3 from Rattus norvegicus (Rat).